The following is a 162-amino-acid chain: Phosphopantetheine adenylyltransferase (162 aa).

S11 contributes to the substrate binding site. Residues 11–12 and H19 contribute to the ATP site; that span reads SF. Substrate is bound by residues K43, V76, and R90. ATP-binding positions include 91–93, E101, and 126–132; these read GLR and HLYISSS.

This sequence belongs to the bacterial CoaD family. In terms of assembly, homohexamer. It depends on Mg(2+) as a cofactor.

It is found in the cytoplasm. The enzyme catalyses (R)-4'-phosphopantetheine + ATP + H(+) = 3'-dephospho-CoA + diphosphate. The protein operates within cofactor biosynthesis; coenzyme A biosynthesis; CoA from (R)-pantothenate: step 4/5. In terms of biological role, reversibly transfers an adenylyl group from ATP to 4'-phosphopantetheine, yielding dephospho-CoA (dPCoA) and pyrophosphate. This is Phosphopantetheine adenylyltransferase from Streptococcus pneumoniae (strain 70585).